The primary structure comprises 131 residues: Small ribosomal subunit protein uS8 (131 aa).

This sequence belongs to the universal ribosomal protein uS8 family. As to quaternary structure, part of the 30S ribosomal subunit. Contacts proteins S5 and S12.

Its function is as follows. One of the primary rRNA binding proteins, it binds directly to 16S rRNA central domain where it helps coordinate assembly of the platform of the 30S subunit. This is Small ribosomal subunit protein uS8 from Campylobacter jejuni subsp. doylei (strain ATCC BAA-1458 / RM4099 / 269.97).